Here is a 457-residue protein sequence, read N- to C-terminus: Argininosuccinate lyase (457 aa).

The protein belongs to the lyase 1 family. Argininosuccinate lyase subfamily.

It is found in the cytoplasm. The catalysed reaction is 2-(N(omega)-L-arginino)succinate = fumarate + L-arginine. It functions in the pathway amino-acid biosynthesis; L-arginine biosynthesis; L-arginine from L-ornithine and carbamoyl phosphate: step 3/3. The chain is Argininosuccinate lyase from Pasteurella multocida (strain Pm70).